The sequence spans 479 residues: MSPQTETKASVGFKAGVKEYKLNYYTPEYETKDTDILAAFRVTPQPGVPPEEAGAAVAAESSTGTWTTVWTDGLTSLDRYKGRCYHIEPVPGEETQFIAYVAYPLDLFEEGSVTNMFTSIVGNVFGFKALAALRLEDLRIPPAYTKTFQGPPHGIQVERDKLNKYGRPLLGCTIKPKLGLSAKNYGRAVYECLRGGLDFTKDDENVNSQPFMRWRDRFLFCAEAIYKSQAETGEIKGHYLNATAGTCEEMMKRAIFARELGVPIVMHDYLTGGFTANTSLAHYCRDNGLLLHIHRAMHAVIDRQKNHGMHFRVLAKALRLSGGDHVHAGTVVGKLEGDRESTLGFVDLLRDDYVEKDRSRGIFFTQDWVSLPGVLPVASGGIHVWHMPALTEIFGDDSVLQFGGGTLGHPWGNAPGAVANRVALEACVQARNEGRDLAVEGNEIIREACKWSPELAAACEVWKEITFNFPTIDKLDGQD.

The propeptide occupies 1–2 (MS). Substrate contacts are provided by N123 and T173. The active-site Proton acceptor is K175. Residue K177 participates in substrate binding. Residues K201, D203, and E204 each contribute to the Mg(2+) site. K201 bears the N6-carboxylysine mark. S208 carries the phosphoserine modification. H294 functions as the Proton acceptor in the catalytic mechanism. Positions 295 and 327 each coordinate substrate. The residue at position 330 (T330) is a Phosphothreonine. Substrate is bound at residue S379.

This sequence belongs to the RuBisCO large chain family. Type I subfamily. In terms of assembly, heterohexadecamer of 8 large chains and 8 small chains; disulfide-linked. The disulfide link is formed within the large subunit homodimers. Requires Mg(2+) as cofactor. The disulfide bond which can form in the large chain dimeric partners within the hexadecamer appears to be associated with oxidative stress and protein turnover.

It localises to the plastid. Its subcellular location is the chloroplast. The catalysed reaction is 2 (2R)-3-phosphoglycerate + 2 H(+) = D-ribulose 1,5-bisphosphate + CO2 + H2O. It catalyses the reaction D-ribulose 1,5-bisphosphate + O2 = 2-phosphoglycolate + (2R)-3-phosphoglycerate + 2 H(+). Its function is as follows. RuBisCO catalyzes two reactions: the carboxylation of D-ribulose 1,5-bisphosphate, the primary event in carbon dioxide fixation, as well as the oxidative fragmentation of the pentose substrate in the photorespiration process. Both reactions occur simultaneously and in competition at the same active site. The protein is Ribulose bisphosphate carboxylase large chain of Brassica oleracea (Wild cabbage).